The chain runs to 61 residues: Large ribosomal subunit protein eL37 (61 aa).

Residues C20, C23, C35, and C38 each contribute to the Zn(2+) site. The C4-type zinc-finger motif lies at 20-38 (CPRCGRHSYNIVKGYCAAC).

The protein belongs to the eukaryotic ribosomal protein eL37 family. It depends on Zn(2+) as a cofactor.

In terms of biological role, binds to the 23S rRNA. The polypeptide is Large ribosomal subunit protein eL37 (Caldivirga maquilingensis (strain ATCC 700844 / DSM 13496 / JCM 10307 / IC-167)).